Consider the following 232-residue polypeptide: Urease accessory protein UreF (232 aa).

It belongs to the UreF family. In terms of assembly, ureD, UreF and UreG form a complex that acts as a GTP-hydrolysis-dependent molecular chaperone, activating the urease apoprotein by helping to assemble the nickel containing metallocenter of UreC. The UreE protein probably delivers the nickel.

It is found in the cytoplasm. Required for maturation of urease via the functional incorporation of the urease nickel metallocenter. This Azorhizobium caulinodans (strain ATCC 43989 / DSM 5975 / JCM 20966 / LMG 6465 / NBRC 14845 / NCIMB 13405 / ORS 571) protein is Urease accessory protein UreF.